We begin with the raw amino-acid sequence, 321 residues long: L-carnitine dehydrogenase (321 aa).

14-19 (GSGVIG) is an NAD(+) binding site.

The protein belongs to the 3-hydroxyacyl-CoA dehydrogenase family. L-carnitine dehydrogenase subfamily. As to quaternary structure, homodimer.

Its subcellular location is the cytoplasm. It catalyses the reaction carnitine + NAD(+) = 3-dehydrocarnitine + NADH + H(+). It participates in amine and polyamine metabolism; carnitine metabolism. Its activity is regulated as follows. Analogs of L-carnitine such as D-carnitine, glycine betaine and choline, are competitive inhibitors of L-carnitine oxidation. Its function is as follows. Catalyzes the NAD(+)-dependent oxidation of L-carnitine to 3-dehydrocarnitine. Is specific for L-carnitine and NAD(+) as substrates. D,L-3-hydroxybutyrate, L-lactate, ethanol, L-malate and D,L-isocitrate are not substrates. Is involved in a L-carnitine degradation pathway that allows P.aeruginosa to grow on L-carnitine as the sole source of carbon and nitrogen. The chain is L-carnitine dehydrogenase from Pseudomonas aeruginosa (strain ATCC 15692 / DSM 22644 / CIP 104116 / JCM 14847 / LMG 12228 / 1C / PRS 101 / PAO1).